Reading from the N-terminus, the 373-residue chain is Spermidine/putrescine import ATP-binding protein PotA (373 aa).

An ABC transporter domain is found at 8 to 238; sequence FELRGVSKYF…PANLYVARFV (231 aa). Residue 40 to 47 coordinates ATP; sequence GPSGCGKT.

This sequence belongs to the ABC transporter superfamily. Spermidine/putrescine importer (TC 3.A.1.11.1) family. In terms of assembly, the complex is composed of two ATP-binding proteins (PotA), two transmembrane proteins (PotB and PotC) and a solute-binding protein (PotD).

It localises to the cell inner membrane. The catalysed reaction is ATP + H2O + polyamine-[polyamine-binding protein]Side 1 = ADP + phosphate + polyamineSide 2 + [polyamine-binding protein]Side 1.. In terms of biological role, part of the ABC transporter complex PotABCD involved in spermidine/putrescine import. Responsible for energy coupling to the transport system. This chain is Spermidine/putrescine import ATP-binding protein PotA, found in Oleidesulfovibrio alaskensis (strain ATCC BAA-1058 / DSM 17464 / G20) (Desulfovibrio alaskensis).